Consider the following 708-residue polypeptide: Polyribonucleotide nucleotidyltransferase (708 aa).

Positions 486 and 492 each coordinate Mg(2+). Positions 553–612 (PRITTIKVPPQKVREVIGSGGKVIREITEVTGTKIDIEDDGTIKIASADAEATQRAVDWI) constitute a KH domain. An S1 motif domain is found at 622–690 (GVVYTGKVVK…DRGKIKLSMK (69 aa)).

The protein belongs to the polyribonucleotide nucleotidyltransferase family. The cofactor is Mg(2+).

Its subcellular location is the cytoplasm. It catalyses the reaction RNA(n+1) + phosphate = RNA(n) + a ribonucleoside 5'-diphosphate. Involved in mRNA degradation. Catalyzes the phosphorolysis of single-stranded polyribonucleotides processively in the 3'- to 5'-direction. In Rhodospirillum rubrum (strain ATCC 11170 / ATH 1.1.1 / DSM 467 / LMG 4362 / NCIMB 8255 / S1), this protein is Polyribonucleotide nucleotidyltransferase.